The sequence spans 501 residues: UDP-N-acetylmuramate--L-alanine ligase (501 aa).

130–136 is an ATP binding site; it reads GTHGKTS.

It belongs to the MurCDEF family.

It is found in the cytoplasm. It carries out the reaction UDP-N-acetyl-alpha-D-muramate + L-alanine + ATP = UDP-N-acetyl-alpha-D-muramoyl-L-alanine + ADP + phosphate + H(+). Its pathway is cell wall biogenesis; peptidoglycan biosynthesis. Cell wall formation. The protein is UDP-N-acetylmuramate--L-alanine ligase of Nocardia farcinica (strain IFM 10152).